A 957-amino-acid chain; its full sequence is Glycine dehydrogenase (decarboxylating) (957 aa).

Lysine 708 carries the post-translational modification N6-(pyridoxal phosphate)lysine.

It belongs to the GcvP family. In terms of assembly, the glycine cleavage system is composed of four proteins: P, T, L and H. Requires pyridoxal 5'-phosphate as cofactor.

It carries out the reaction N(6)-[(R)-lipoyl]-L-lysyl-[glycine-cleavage complex H protein] + glycine + H(+) = N(6)-[(R)-S(8)-aminomethyldihydrolipoyl]-L-lysyl-[glycine-cleavage complex H protein] + CO2. The glycine cleavage system catalyzes the degradation of glycine. The P protein binds the alpha-amino group of glycine through its pyridoxal phosphate cofactor; CO(2) is released and the remaining methylamine moiety is then transferred to the lipoamide cofactor of the H protein. The chain is Glycine dehydrogenase (decarboxylating) from Pectobacterium atrosepticum (strain SCRI 1043 / ATCC BAA-672) (Erwinia carotovora subsp. atroseptica).